The primary structure comprises 65 residues: Large ribosomal subunit protein bL35 (65 aa).

Residues 1 to 26 (MPKMKTHRGAAKRFKKTGSGKLKRAK) are disordered.

It belongs to the bacterial ribosomal protein bL35 family.

This chain is Large ribosomal subunit protein bL35, found in Clostridium novyi (strain NT).